Consider the following 1196-residue polypeptide: Major DNA-binding protein (1196 aa).

Residues 499 to 512 (CNLCTFDTRHACVH) fold into a zinc finger. 2 short sequence motifs (required for filament formation) span residues 843-844 (FW) and 1142-1144 (FNF). A disordered region spans residues 1158–1196 (GGPGAPGPAFAGRKRAFHGDDPFGEGPPDKKGDLTLDML). A required for nuclear localization region spans residues 1170–1196 (RKRAFHGDDPFGEGPPDKKGDLTLDML). Residues 1174–1196 (FHGDDPFGEGPPDKKGDLTLDML) show a composition bias toward basic and acidic residues.

The protein belongs to the herpesviridae major DNA-binding protein family. As to quaternary structure, homooligomers. Forms double-helical filaments necessary for the formation of replication compartments within the host nucleus. Interacts with the origin-binding protein. Interacts with the helicase primase complex; this interaction stimulates primer synthesis activity of the helicase-primase complex. Interacts with the DNA polymerase. Interacts with the alkaline exonuclease; this interaction increases its nuclease processivity.

Its subcellular location is the host nucleus. In terms of biological role, plays several crucial roles in viral infection. Participates in the opening of the viral DNA origin to initiate replication by interacting with the origin-binding protein. May disrupt loops, hairpins and other secondary structures present on ssDNA to reduce and eliminate pausing of viral DNA polymerase at specific sites during elongation. Promotes viral DNA recombination by performing strand-transfer, characterized by the ability to transfer a DNA strand from a linear duplex to a complementary single-stranded DNA circle. Can also catalyze the renaturation of complementary single strands. Additionally, reorganizes the host cell nucleus, leading to the formation of prereplicative sites and replication compartments. This process is driven by the protein which can form double-helical filaments in the absence of DNA. In Human herpesvirus 1 (strain KOS) (HHV-1), this protein is Major DNA-binding protein.